The sequence spans 286 residues: ATP synthase gamma chain (286 aa).

It belongs to the ATPase gamma chain family. F-type ATPases have 2 components, CF(1) - the catalytic core - and CF(0) - the membrane proton channel. CF(1) has five subunits: alpha(3), beta(3), gamma(1), delta(1), epsilon(1). CF(0) has three main subunits: a, b and c.

It localises to the cell inner membrane. Its function is as follows. Produces ATP from ADP in the presence of a proton gradient across the membrane. The gamma chain is believed to be important in regulating ATPase activity and the flow of protons through the CF(0) complex. In Solibacter usitatus (strain Ellin6076), this protein is ATP synthase gamma chain.